The primary structure comprises 314 residues: Olfactory receptor 1E1 (314 aa).

Residues 1–25 (MMGQNQTSISDFLLLGLPIQPEQQN) are Extracellular-facing. N5 carries an N-linked (GlcNAc...) asparagine glycan. A helical transmembrane segment spans residues 26–49 (LCYALFLAMYLTTLLGNLLIIVLI). The Cytoplasmic segment spans residues 50 to 57 (RLDSHLHT). Residues 58-79 (PMYLFLSNLSFSDLCFSSVTIP) traverse the membrane as a helical segment. Residues 80 to 100 (KLLQNMQNQDPSIPYADCLTQ) lie on the Extracellular side of the membrane. A disulfide bridge connects residues C97 and C189. A helical membrane pass occupies residues 101-120 (MYFFLLFGDLESFLLVAMAY). The Cytoplasmic segment spans residues 121-139 (DRYVAICFPLHYTAIMSPM). The chain crosses the membrane as a helical span at residues 140–158 (LCLSVVALSWVLTTFHAML). Residues 159 to 195 (HTLLMARLCFCADNVIPHFFCDMSALLKLACSDTRVN) are Extracellular-facing. A helical transmembrane segment spans residues 196–219 (EWVIFIMGGLILVIPFLLILGSYA). Topologically, residues 220–236 (RIVSSILKVPSSKGICK) are cytoplasmic. The helical transmembrane segment at 237-259 (ALSTCGSHLSVVSLFYGTVIGLY) threads the bilayer. At 260-272 (LCPSANSSTLKDT) the chain is on the extracellular side. A helical membrane pass occupies residues 273–292 (VMAMIYTVVTPMLNPFIYSL). Residues 293–314 (RNRDMKGALSRVIHQKKTFFSL) are Cytoplasmic-facing.

The protein belongs to the G-protein coupled receptor 1 family.

The protein localises to the cell membrane. Its function is as follows. Odorant receptor. The polypeptide is Olfactory receptor 1E1 (OR1E1) (Pan troglodytes (Chimpanzee)).